A 258-amino-acid chain; its full sequence is Spindlin-2 (258 aa).

Positions 1 to 47 (MKTPHKKATARQQTREIVDDHTLSASMRKKKISQKKQRGRPSSQTRR) are disordered. Basic and acidic residues predominate over residues 13 to 22 (QTREIVDDHT). Over residues 27-39 (MRKKKISQKKQRG) the composition is skewed to basic residues. Tudor-like domain regions lie at residues 50–99 (VGCR…LELH), 129–178 (IGKA…YQLL), and 210–255 (IGKH…YDLV). Histone H3K4me3 and H3R8me2a binding stretches follow at residues Glu138 and 246 to 248 (DFH).

It belongs to the SPIN/STSY family. Interacts with C11orf84/SPINDOC.

It localises to the nucleus. Its function is as follows. May be involved in the regulation of cell cycle progression. Exhibits H3K4me3-binding activity. This is Spindlin-2 (SPIN2) from Bos taurus (Bovine).